A 204-amino-acid polypeptide reads, in one-letter code: Methylthioribulose-1-phosphate dehydratase (204 aa).

The Zn(2+) site is built by His-94 and His-96.

Belongs to the aldolase class II family. MtnB subfamily. Zn(2+) serves as cofactor.

It catalyses the reaction 5-(methylsulfanyl)-D-ribulose 1-phosphate = 5-methylsulfanyl-2,3-dioxopentyl phosphate + H2O. The protein operates within amino-acid biosynthesis; L-methionine biosynthesis via salvage pathway; L-methionine from S-methyl-5-thio-alpha-D-ribose 1-phosphate: step 2/6. Functionally, catalyzes the dehydration of methylthioribulose-1-phosphate (MTRu-1-P) into 2,3-diketo-5-methylthiopentyl-1-phosphate (DK-MTP-1-P). This chain is Methylthioribulose-1-phosphate dehydratase, found in Pseudomonas syringae pv. tomato (strain ATCC BAA-871 / DC3000).